The primary structure comprises 190 residues: NADH-quinone oxidoreductase subunit C (190 aa).

It belongs to the complex I 30 kDa subunit family. As to quaternary structure, NDH-1 is composed of 14 different subunits. Subunits NuoB, C, D, E, F, and G constitute the peripheral sector of the complex.

It localises to the cell membrane. The enzyme catalyses a quinone + NADH + 5 H(+)(in) = a quinol + NAD(+) + 4 H(+)(out). NDH-1 shuttles electrons from NADH, via FMN and iron-sulfur (Fe-S) centers, to quinones in the respiratory chain. The immediate electron acceptor for the enzyme in this species is believed to be ubiquinone. Couples the redox reaction to proton translocation (for every two electrons transferred, four hydrogen ions are translocated across the cytoplasmic membrane), and thus conserves the redox energy in a proton gradient. This is NADH-quinone oxidoreductase subunit C from Wolbachia sp. subsp. Brugia malayi (strain TRS).